A 276-amino-acid chain; its full sequence is Putative pyruvate, phosphate dikinase regulatory protein (276 aa).

150–157 (GVSRTSKT) contacts ADP.

This sequence belongs to the pyruvate, phosphate/water dikinase regulatory protein family. PDRP subfamily.

The catalysed reaction is N(tele)-phospho-L-histidyl/L-threonyl-[pyruvate, phosphate dikinase] + ADP = N(tele)-phospho-L-histidyl/O-phospho-L-threonyl-[pyruvate, phosphate dikinase] + AMP + H(+). The enzyme catalyses N(tele)-phospho-L-histidyl/O-phospho-L-threonyl-[pyruvate, phosphate dikinase] + phosphate + H(+) = N(tele)-phospho-L-histidyl/L-threonyl-[pyruvate, phosphate dikinase] + diphosphate. Functionally, bifunctional serine/threonine kinase and phosphorylase involved in the regulation of the pyruvate, phosphate dikinase (PPDK) by catalyzing its phosphorylation/dephosphorylation. The protein is Putative pyruvate, phosphate dikinase regulatory protein of Lacticaseibacillus casei (strain BL23) (Lactobacillus casei).